A 130-amino-acid chain; its full sequence is Large ribosomal subunit protein bL12c (130 aa).

The protein belongs to the bacterial ribosomal protein bL12 family. As to quaternary structure, homodimer. Part of the ribosomal stalk of the 50S ribosomal subunit. Forms a multimeric L10(L12)X complex, where L10 forms an elongated spine to which 2 to 4 L12 dimers bind in a sequential fashion. Binds GTP-bound translation factors.

It localises to the plastid. Its subcellular location is the chloroplast. In terms of biological role, forms part of the ribosomal stalk which helps the ribosome interact with GTP-bound translation factors. Is thus essential for accurate translation. The sequence is that of Large ribosomal subunit protein bL12c from Cyanidium caldarium (Red alga).